The sequence spans 201 residues: MARYTGPATRVSRRLRVDLVGGDMAFERRPYPPGQAGRNRIKESEYLLQLQEKQKAKYTYGVLERQFRRYYAEANRLPGKTGDNLVVLLESRLDNVIYRAGLANTRRQARQLVSHGHFTVNGKKINVPSFRVTQYDIIDVRERSQKMEWFEEAQDRLVDANVPAWLQVVPDTLRILVHQLPERAQIDVPLQEQLIVELYSK.

In terms of domain architecture, S4 RNA-binding spans 91–154 (SRLDNVIYRA…QKMEWFEEAQ (64 aa)).

This sequence belongs to the universal ribosomal protein uS4 family. Part of the 30S ribosomal subunit. Contacts protein S5. The interaction surface between S4 and S5 is involved in control of translational fidelity.

In terms of biological role, one of the primary rRNA binding proteins, it binds directly to 16S rRNA where it nucleates assembly of the body of the 30S subunit. With S5 and S12 plays an important role in translational accuracy. The polypeptide is Small ribosomal subunit protein uS4 (Corynebacterium aurimucosum (strain ATCC 700975 / DSM 44827 / CIP 107346 / CN-1) (Corynebacterium nigricans)).